The sequence spans 325 residues: ATP phosphoribosyltransferase (325 aa).

It belongs to the ATP phosphoribosyltransferase family. Long subfamily. Requires Mg(2+) as cofactor.

It is found in the cytoplasm. It carries out the reaction 1-(5-phospho-beta-D-ribosyl)-ATP + diphosphate = 5-phospho-alpha-D-ribose 1-diphosphate + ATP. It functions in the pathway amino-acid biosynthesis; L-histidine biosynthesis; L-histidine from 5-phospho-alpha-D-ribose 1-diphosphate: step 1/9. With respect to regulation, feedback inhibited by histidine. Its function is as follows. Catalyzes the condensation of ATP and 5-phosphoribose 1-diphosphate to form N'-(5'-phosphoribosyl)-ATP (PR-ATP). Has a crucial role in the pathway because the rate of histidine biosynthesis seems to be controlled primarily by regulation of HisG enzymatic activity. The polypeptide is ATP phosphoribosyltransferase (Bradyrhizobium sp. (strain ORS 278)).